The sequence spans 281 residues: 39kDa core protein OPG130 (281 aa).

The span at 1 to 22 (MDFFNKFSQGLAESSTPKSSIY) shows a compositional bias: polar residues. 3 disordered regions span residues 1–33 (MDFF…DTKK), 91–112 (ILLP…TSSD), and 149–192 (NKDQ…PQPP). Residues 24-33 (SEEKDPDTKK) are compositionally biased toward basic and acidic residues. Residues 94–112 (PSSTAPTPKPRQQTNTSSD) show a composition bias toward polar residues. The span at 154–175 (TTTPPSTQPSQTLPTTTCTQQS) shows a compositional bias: low complexity.

The protein belongs to the orthopoxvirus OPG130 family. As to quaternary structure, interacts with OPG136 and its cleaved form. In terms of processing, its phosphorylation state is regulated by the OPG054 kinase and the OPG106 phosphatase.

It localises to the virion. The protein resides in the host endoplasmic reticulum-Golgi intermediate compartment membrane. Its function is as follows. Component of the virion core. Participates in virion assembly. The polypeptide is 39kDa core protein OPG130 (OPG130) (Vaccinia virus (strain Copenhagen) (VACV)).